The sequence spans 440 residues: FAD-dependent monooxygenase afoD (440 aa).

The chain crosses the membrane as a helical span at residues 10–30; sequence PLSIAIIGGGIIGLMTALGLL. 3 residues coordinate FAD: Glu-41, Leu-145, and Asp-320. Asn-352 carries N-linked (GlcNAc...) asparagine glycosylation.

The protein belongs to the paxM FAD-dependent monooxygenase family. FAD is required as a cofactor.

It localises to the membrane. FAD-dependent monooxygenase; part of the gene cluster that mediates the biosynthesis of asperfuranone, a probable antitumor agent. The polyketide synthase afoG is responsible for producing the 3,5-dimethyloctadienone moiety from acetyl-CoA, three malonyl-CoA, and two S-adenosyl methionines (SAM). The 3,5-dimethyloctadienone moiety is then loaded onto the SAT domain of afoE and extended with four malonyl-CoA and one SAM, which leads to the formation of 2,4-dihydroxy-6-(5,7-dimethyl-2-oxo-trans-3-trans-5-nonadienyl)-3-methylbenzaldehyde (compound 2) after reductive release and aldol condensation. AfoD is the next enzyme in the biosynthesis sequence and hydroxylates the side chain at the benzylic position of compound 2. After benzylic hydroxylation, a furan ring is formed after five-member ring hemiacetal formation and water elimination. AfoF and afoC are proposed to oxidize the R-diketone proton and to reduce the unconjugated carbonyl group, respectively, to generate asperfuranone. Since no intermediates could be isolated from afoF and afoC deletants, the sequence of these two enzymes is not fully understood. Moreover, since afoC deletant still produces a small amount of asperfuranone, other endogenous oxidoreductases might catalyze the same reaction with much less efficiency. This Emericella nidulans (strain FGSC A4 / ATCC 38163 / CBS 112.46 / NRRL 194 / M139) (Aspergillus nidulans) protein is FAD-dependent monooxygenase afoD.